The chain runs to 67 residues: Peptide Ctry2606 (67 aa).

An N-terminal signal peptide occupies residues 1–23; that stretch reads MKTQTALFSFFLVLLLVATQTEG. Leu-33 is subject to Leucine amide. A propeptide spanning residues 37-67 is cleaved from the precursor; sequence ALRNQNFVDYAFDPSLSAADWRALETLLEEY.

This sequence belongs to the non-disulfide-bridged peptide (NDBP) superfamily. Short antimicrobial peptide (group 4) family. In terms of tissue distribution, expressed by the venom gland.

The protein localises to the secreted. Its function is as follows. Antimicrobial peptide. This is Peptide Ctry2606 from Chaerilus tryznai (Scorpion).